The chain runs to 203 residues: MDPVIIGVGGPVGAGKTQLVERLTRAMSHEISMAAITNDIYTIEDAKILARTSVLPEERIIGLETGGCPHTAIREDTSMNEAAIEQLKKRFPDLQVIFVESGGDNLSATFSPELVDFSIYVIDVAQGEKIPRKAGQGMIKSDLFVINKTDLAPHVGADLGVMEEDSRVFRKDKPFAFTNLKTDEGLERVQEWIRTDVLMLDLA.

Residue 10-17 (GPVGAGKT) participates in GTP binding.

Belongs to the SIMIBI class G3E GTPase family. UreG subfamily. In terms of assembly, homodimer. UreD, UreF and UreG form a complex that acts as a GTP-hydrolysis-dependent molecular chaperone, activating the urease apoprotein by helping to assemble the nickel containing metallocenter of UreC. The UreE protein probably delivers the nickel.

It localises to the cytoplasm. Functionally, facilitates the functional incorporation of the urease nickel metallocenter. This process requires GTP hydrolysis, probably effectuated by UreG. The sequence is that of Urease accessory protein UreG from Kocuria rhizophila (strain ATCC 9341 / DSM 348 / NBRC 103217 / DC2201).